Reading from the N-terminus, the 806-residue chain is DNA topoisomerase 1 (806 aa).

Residues 1 to 15 (MSVVSNHHSNGNGNS) are compositionally biased toward low complexity. Residues 1-236 (MSVVSNHHSN…KKEPPKKKVK (236 aa)) are disordered. The segment covering 24-34 (DEIKKEVKDEP) has biased composition (basic and acidic residues). Basic residues-rich tracts occupy residues 49–60 (RDKKEKKQKKRK) and 98–108 (EKKKSKKNNKK). Over residues 113–127 (SSEDDDEESEGDVSE) the composition is skewed to acidic residues. Positions 128–137 (EDVKPQIHSD) are enriched in basic and acidic residues. The segment covering 138–153 (DELEEEDEAPTTDDEE) has biased composition (acidic residues). Residues 159-176 (EKERRKKEKREKKERKEK) are compositionally biased toward basic residues. The span at 177 to 188 (KRLEKENRKIKE) shows a compositional bias: basic and acidic residues. The segment covering 189–199 (EDDEDSDDEDD) has biased composition (acidic residues). Positions 210-229 (KGAEKSKPSTSKKDAGGKKE) are enriched in basic and acidic residues. Interaction with DNA stretches follow at residues 467-468 (KY), 530-535 (RAGNEK), and 634-636 (TVK). The 330-residue stretch at 474–803 (SSKIKGEKDF…IDMTNSSDEE (330 aa)) folds into the Topo IB-type catalytic domain. Tyr761 acts as the O-(3'-phospho-DNA)-tyrosine intermediate in catalysis.

It belongs to the type IB topoisomerase family. Expressed in male germ cells and in mature sperm.

The protein resides in the nucleus. It localises to the nucleolus. Its subcellular location is the chromosome. It catalyses the reaction ATP-independent breakage of single-stranded DNA, followed by passage and rejoining.. Functionally, releases the supercoiling and torsional tension of DNA introduced during the DNA replication and transcription by transiently cleaving and rejoining one strand of the DNA duplex. Introduces a single-strand break via transesterification at a target site in duplex DNA. The scissile phosphodiester is attacked by the catalytic tyrosine of the enzyme, resulting in the formation of a DNA-(3'-phosphotyrosyl)-enzyme intermediate and the expulsion of a 5'-OH DNA strand. The free DNA strand then rotates around the intact phosphodiester bond on the opposing strand, thus removing DNA supercoils. Finally, in the religation step, the DNA 5'-OH attacks the covalent intermediate to expel the active-site tyrosine and restore the DNA phosphodiester backbone. Required for normal spermatogenesis and oogenesis. The protein is DNA topoisomerase 1 (top-1) of Caenorhabditis elegans.